A 172-amino-acid polypeptide reads, in one-letter code: Large ribosomal subunit protein uL10 (172 aa).

It belongs to the universal ribosomal protein uL10 family. Part of the ribosomal stalk of the 50S ribosomal subunit. The N-terminus interacts with L11 and the large rRNA to form the base of the stalk. The C-terminus forms an elongated spine to which L12 dimers bind in a sequential fashion forming a multimeric L10(L12)X complex.

Forms part of the ribosomal stalk, playing a central role in the interaction of the ribosome with GTP-bound translation factors. The polypeptide is Large ribosomal subunit protein uL10 (Clostridium tetani (strain Massachusetts / E88)).